The chain runs to 340 residues: NAC domain-containing protein 89 (340 aa).

One can recognise an NAC domain in the interval V21–N164. Residues I119–G170 mediate DNA binding. Positions Y167–S181 are enriched in polar residues. The tract at residues Y167–P198 is disordered.

Interacts with PAS1.

Its subcellular location is the cytoplasm. It localises to the nucleus. Its function is as follows. Transcription factor involved in plant cell division. The chain is NAC domain-containing protein 89 (NAC089) from Arabidopsis thaliana (Mouse-ear cress).